Here is a 324-residue protein sequence, read N- to C-terminus: Glyoxylate/hydroxypyruvate reductase B (324 aa).

Active-site residues include Arg237 and Glu266. The active-site Proton donor is His285.

The protein belongs to the D-isomer specific 2-hydroxyacid dehydrogenase family. GhrB subfamily. Homodimer.

It localises to the cytoplasm. It carries out the reaction glycolate + NADP(+) = glyoxylate + NADPH + H(+). The catalysed reaction is (R)-glycerate + NAD(+) = 3-hydroxypyruvate + NADH + H(+). It catalyses the reaction (R)-glycerate + NADP(+) = 3-hydroxypyruvate + NADPH + H(+). Functionally, catalyzes the NADPH-dependent reduction of glyoxylate and hydroxypyruvate into glycolate and glycerate, respectively. The protein is Glyoxylate/hydroxypyruvate reductase B of Escherichia coli (strain ATCC 8739 / DSM 1576 / NBRC 3972 / NCIMB 8545 / WDCM 00012 / Crooks).